Reading from the N-terminus, the 945-residue chain is Bifunctional glutamine synthetase adenylyltransferase/adenylyl-removing enzyme (945 aa).

The interval Met-1 to Ser-441 is adenylyl removase. The adenylyl transferase stretch occupies residues Tyr-450 to Gly-945.

It belongs to the GlnE family. It depends on Mg(2+) as a cofactor.

It catalyses the reaction [glutamine synthetase]-O(4)-(5'-adenylyl)-L-tyrosine + phosphate = [glutamine synthetase]-L-tyrosine + ADP. It carries out the reaction [glutamine synthetase]-L-tyrosine + ATP = [glutamine synthetase]-O(4)-(5'-adenylyl)-L-tyrosine + diphosphate. Involved in the regulation of glutamine synthetase GlnA, a key enzyme in the process to assimilate ammonia. When cellular nitrogen levels are high, the C-terminal adenylyl transferase (AT) inactivates GlnA by covalent transfer of an adenylyl group from ATP to specific tyrosine residue of GlnA, thus reducing its activity. Conversely, when nitrogen levels are low, the N-terminal adenylyl removase (AR) activates GlnA by removing the adenylyl group by phosphorolysis, increasing its activity. The regulatory region of GlnE binds the signal transduction protein PII (GlnB) which indicates the nitrogen status of the cell. The protein is Bifunctional glutamine synthetase adenylyltransferase/adenylyl-removing enzyme of Serratia proteamaculans (strain 568).